We begin with the raw amino-acid sequence, 2617 residues long: Non-reducing polyketide synthase epaA (2617 aa).

Residues 95 to 231 (PNILLSPMVV…AARSISSLQQ (137 aa)) are N-terminal acylcarrier protein transacylase domain (SAT). The Nucleophile; for transacylase activity role is filled by C132. H250 (proton donor/acceptor; for transacylase activity) is an active-site residue. Residues 372–790 (PNEIAVIGMS…GSNASMVVAQ (419 aa)) enclose the Ketosynthase family 3 (KS3) domain. Catalysis depends on for beta-ketoacyl synthase activity residues C539, H674, and H713. A malonyl-CoA:ACP transacylase (MAT) domain region spans residues 902–1193 (FGGQISNYVG…ITSMASRALG (292 aa)). Positions 1282–1413 (PKTLWSLIEA…GKLAFLSGQD (132 aa)) are N-terminal hotdog fold. The 310-residue stretch at 1282–1591 (PKTLWSLIEA…YHKVAKASMS (310 aa)) folds into the PKS/mFAS DH domain. The tract at residues 1310-1589 (LVSGHVIANT…INYHKVAKAS (280 aa)) is product template (PT) domain. The active-site Proton acceptor; for dehydratase activity is H1314. Residues 1443-1591 (ADDIIQGRNI…YHKVAKASMS (149 aa)) are C-terminal hotdog fold. Catalysis depends on D1499, which acts as the Proton donor; for dehydratase activity. The tract at residues 1600-1651 (TEAAPSSSTRAHPTSSSSPRLPGPSVPEDKSQNETQPAGTNAVAKKKSEKSA) is disordered. Over residues 1602–1619 (AAPSSSTRAHPTSSSSPR) the composition is skewed to low complexity. One can recognise a Carrier domain in the interval 1653 to 1727 (QNVLEKTRAL…GLVEYVQSAV (75 aa)). O-(pantetheine 4'-phosphoryl)serine is present on S1687. Positions 1728–1799 (GVPTNGDEPD…PAMPPASSKT (72 aa)) are disordered. Residues 1750–1766 (LAPSPSSSSSSTNLTED) are compositionally biased toward low complexity. Over residues 1769 to 1785 (LDQAETTTNISSYPGQT) the composition is skewed to polar residues. The methyltransferase domain stretch occupies residues 1970–2158 (DSLLNKLSYR…VGYGQVDWTD (189 aa)). The NADPH-binding (R) domain stretch occupies residues 2240–2485 (ITGATGSLGV…LCWTPVNDVA (246 aa)).

Requires pantetheine 4'-phosphate as cofactor.

The protein operates within secondary metabolite biosynthesis. Its function is as follows. Non-reducing polyketide synthase; part of the gene cluster that mediates the biosynthesis of nigerpyrone and its derivatives carbonarone A and pestalamide A. The biosynthesis pathway begins with the polyketide assembly by epaA to form phenylacetyl triketide precursor from successive condensation of two malonyl-CoA, presumably with one phenylacetyl-CoA starter unit produced by the phenylacetyl-CoA ligase epaB. For the nigerpyrone biosynthesis, the reactive polyketide chain is released as an aldehyde through the R-domain. A nonenzymatic cyclization and dehydration may create nigerpyrone. For the biosynthesis of carbonarone A and pestalamide A, an extra methyl group is added through the C-methyltransferase domain. Several further steps involving the dehydrogenase orf1, the cytochrome P450 monooxygenase orf2 and the FAD-dependent monooxygenase orf3 are required to form a carbonarone A precursor which is converted to carbonarone A via cyclization. The O-acetyltransferase epaC could catalyze the transfer of 2-methylsuccinyl-CoA, a common intermediate in the ethylmalonyl-CoA pathway, to generate the final product pestalamide A. This Aspergillus niger (strain ATCC MYA-4892 / CBS 513.88 / FGSC A1513) protein is Non-reducing polyketide synthase epaA.